The sequence spans 312 residues: Methionyl-tRNA formyltransferase (312 aa).

Residue 109–112 (SLLP) coordinates (6S)-5,6,7,8-tetrahydrofolate.

This sequence belongs to the Fmt family.

It carries out the reaction L-methionyl-tRNA(fMet) + (6R)-10-formyltetrahydrofolate = N-formyl-L-methionyl-tRNA(fMet) + (6S)-5,6,7,8-tetrahydrofolate + H(+). Its function is as follows. Attaches a formyl group to the free amino group of methionyl-tRNA(fMet). The formyl group appears to play a dual role in the initiator identity of N-formylmethionyl-tRNA by promoting its recognition by IF2 and preventing the misappropriation of this tRNA by the elongation apparatus. This Ruminiclostridium cellulolyticum (strain ATCC 35319 / DSM 5812 / JCM 6584 / H10) (Clostridium cellulolyticum) protein is Methionyl-tRNA formyltransferase.